A 506-amino-acid polypeptide reads, in one-letter code: UDP-N-acetylmuramoyl-L-alanyl-D-glutamate--2,6-diaminopimelate ligase (506 aa).

S42 contacts UDP-N-acetyl-alpha-D-muramoyl-L-alanyl-D-glutamate. 125–131 contacts ATP; the sequence is GTSGKTT. Residues 166 to 167, S193, and R201 contribute to the UDP-N-acetyl-alpha-D-muramoyl-L-alanyl-D-glutamate site; that span reads TT. K233 is subject to N6-carboxylysine. Meso-2,6-diaminopimelate is bound by residues R395, 419–422, G475, and E479; that span reads DNPR. Positions 419-422 match the Meso-diaminopimelate recognition motif motif; it reads DNPR.

This sequence belongs to the MurCDEF family. MurE subfamily. Mg(2+) is required as a cofactor. Carboxylation is probably crucial for Mg(2+) binding and, consequently, for the gamma-phosphate positioning of ATP.

It localises to the cytoplasm. The enzyme catalyses UDP-N-acetyl-alpha-D-muramoyl-L-alanyl-D-glutamate + meso-2,6-diaminopimelate + ATP = UDP-N-acetyl-alpha-D-muramoyl-L-alanyl-gamma-D-glutamyl-meso-2,6-diaminopimelate + ADP + phosphate + H(+). It functions in the pathway cell wall biogenesis; peptidoglycan biosynthesis. Its function is as follows. Catalyzes the addition of meso-diaminopimelic acid to the nucleotide precursor UDP-N-acetylmuramoyl-L-alanyl-D-glutamate (UMAG) in the biosynthesis of bacterial cell-wall peptidoglycan. This chain is UDP-N-acetylmuramoyl-L-alanyl-D-glutamate--2,6-diaminopimelate ligase, found in Streptomyces coelicolor (strain ATCC BAA-471 / A3(2) / M145).